The following is a 275-amino-acid chain: Diaminopimelate epimerase (275 aa).

Asparagine 20 and asparagine 63 together coordinate substrate. Residue cysteine 72 is the Proton donor of the active site. Substrate contacts are provided by residues glycine 73–asparagine 74, asparagine 179, and glutamate 197–arginine 198. The active-site Proton acceptor is cysteine 207. Glycine 208 to threonine 209 serves as a coordination point for substrate.

It belongs to the diaminopimelate epimerase family. Homodimer.

Its subcellular location is the cytoplasm. It catalyses the reaction (2S,6S)-2,6-diaminopimelate = meso-2,6-diaminopimelate. Its pathway is amino-acid biosynthesis; L-lysine biosynthesis via DAP pathway; DL-2,6-diaminopimelate from LL-2,6-diaminopimelate: step 1/1. Its function is as follows. Catalyzes the stereoinversion of LL-2,6-diaminopimelate (L,L-DAP) to meso-diaminopimelate (meso-DAP), a precursor of L-lysine and an essential component of the bacterial peptidoglycan. In Chlamydia trachomatis serovar A (strain ATCC VR-571B / DSM 19440 / HAR-13), this protein is Diaminopimelate epimerase.